The sequence spans 136 residues: Small ribosomal subunit protein uS9 (136 aa).

The protein belongs to the universal ribosomal protein uS9 family.

This is Small ribosomal subunit protein uS9 from Borrelia hermsii (strain HS1 / DAH).